The primary structure comprises 426 residues: Zinc finger protein 662 (426 aa).

Residues 1-44 (MLENYGAVASLAAFPFPKPALISQLERGETPWCSVPRGALDGEA) form the KRAB domain. 8 consecutive C2H2-type zinc fingers follow at residues 192–214 (YICEECGKCFDQNEDFDQHQKTH), 220–242 (YGCKECGKAFSFRSHCIAHQRIH), 248–270 (YECQECAKAFVWKSNLIRHQRIH), 276–298 (FECKECGKGFSQNTSLTQHQRIH), 304–326 (YTCKECGKSFTRNPALLRHQRMH), 332–354 (YECKDCGKGFMWNSDLSQHQRVH), 360–382 (HECTDCGKSFFCKAHLIRHQRIH), and 388–410 (YKCNDCGKAFSQNSVLIKHQRRH).

It belongs to the krueppel C2H2-type zinc-finger protein family.

Its subcellular location is the nucleus. In terms of biological role, may be involved in transcriptional regulation. This is Zinc finger protein 662 (ZNF662) from Homo sapiens (Human).